The chain runs to 73 residues: Translation initiation factor IF-1 (73 aa).

Positions 1–72 constitute an S1-like domain; the sequence is MAKEDVIEVE…TKGRITYRFI (72 aa).

The protein belongs to the IF-1 family. Component of the 30S ribosomal translation pre-initiation complex which assembles on the 30S ribosome in the order IF-2 and IF-3, IF-1 and N-formylmethionyl-tRNA(fMet); mRNA recruitment can occur at any time during PIC assembly.

The protein localises to the cytoplasm. One of the essential components for the initiation of protein synthesis. Stabilizes the binding of IF-2 and IF-3 on the 30S subunit to which N-formylmethionyl-tRNA(fMet) subsequently binds. Helps modulate mRNA selection, yielding the 30S pre-initiation complex (PIC). Upon addition of the 50S ribosomal subunit IF-1, IF-2 and IF-3 are released leaving the mature 70S translation initiation complex. The protein is Translation initiation factor IF-1 of Lactobacillus johnsonii (strain CNCM I-12250 / La1 / NCC 533).